A 457-amino-acid chain; its full sequence is Argininosuccinate lyase (457 aa).

The protein belongs to the lyase 1 family. Argininosuccinate lyase subfamily.

The protein localises to the cytoplasm. The enzyme catalyses 2-(N(omega)-L-arginino)succinate = fumarate + L-arginine. It functions in the pathway amino-acid biosynthesis; L-arginine biosynthesis; L-arginine from L-ornithine and carbamoyl phosphate: step 3/3. This is Argininosuccinate lyase from Shigella boydii serotype 18 (strain CDC 3083-94 / BS512).